The primary structure comprises 232 residues: Orotidine 5'-phosphate decarboxylase (232 aa).

Residues Asp-13, Lys-35, 62–71 (DLKFHDIPNT), Thr-122, Arg-182, Gln-191, Gly-211, and Arg-212 contribute to the substrate site. Catalysis depends on Lys-64, which acts as the Proton donor.

The protein belongs to the OMP decarboxylase family. Type 1 subfamily. Homodimer.

The enzyme catalyses orotidine 5'-phosphate + H(+) = UMP + CO2. It participates in pyrimidine metabolism; UMP biosynthesis via de novo pathway; UMP from orotate: step 2/2. Catalyzes the decarboxylation of orotidine 5'-monophosphate (OMP) to uridine 5'-monophosphate (UMP). This is Orotidine 5'-phosphate decarboxylase from Pseudomonas syringae pv. tomato (strain ATCC BAA-871 / DC3000).